The chain runs to 348 residues: Phosphoribosylformylglycinamidine cyclo-ligase (348 aa).

It belongs to the AIR synthase family.

It localises to the cytoplasm. The catalysed reaction is 2-formamido-N(1)-(5-O-phospho-beta-D-ribosyl)acetamidine + ATP = 5-amino-1-(5-phospho-beta-D-ribosyl)imidazole + ADP + phosphate + H(+). The protein operates within purine metabolism; IMP biosynthesis via de novo pathway; 5-amino-1-(5-phospho-D-ribosyl)imidazole from N(2)-formyl-N(1)-(5-phospho-D-ribosyl)glycinamide: step 2/2. The chain is Phosphoribosylformylglycinamidine cyclo-ligase from Geobacter sp. (strain M21).